A 272-amino-acid polypeptide reads, in one-letter code: ATP synthase subunit a (272 aa).

Helical transmembrane passes span 42–62 (IDSL…AGFV), 108–128 (FVWI…LPCI), 140–162 (ILPS…LMIF), 177–197 (LIYH…LEII), 219–239 (LIFI…LSVP), and 241–261 (AIFH…LTII).

It belongs to the ATPase A chain family. As to quaternary structure, F-type ATPases have 2 components, CF(1) - the catalytic core - and CF(0) - the membrane proton channel. CF(1) has five subunits: alpha(3), beta(3), gamma(1), delta(1), epsilon(1). CF(0) has three main subunits: a(1), b(2) and c(9-12). The alpha and beta chains form an alternating ring which encloses part of the gamma chain. CF(1) is attached to CF(0) by a central stalk formed by the gamma and epsilon chains, while a peripheral stalk is formed by the delta and b chains.

The protein resides in the cell inner membrane. Key component of the proton channel; it plays a direct role in the translocation of protons across the membrane. The protein is ATP synthase subunit a of Blochmanniella floridana.